Reading from the N-terminus, the 525-residue chain is GMP synthase [glutamine-hydrolyzing] (525 aa).

A Glutamine amidotransferase type-1 domain is found at 9–207; the sequence is RILILDFGSQ…VLDVCQCEAL (199 aa). Cysteine 86 (nucleophile) is an active-site residue. Catalysis depends on residues histidine 181 and glutamate 183. The GMPS ATP-PPase domain occupies 208-400; the sequence is WTPASIIEDT…LGLPYDMLNR (193 aa). Position 235–241 (235–241) interacts with ATP; the sequence is SGGVDSS.

In terms of assembly, homodimer.

The catalysed reaction is XMP + L-glutamine + ATP + H2O = GMP + L-glutamate + AMP + diphosphate + 2 H(+). It functions in the pathway purine metabolism; GMP biosynthesis; GMP from XMP (L-Gln route): step 1/1. In terms of biological role, catalyzes the synthesis of GMP from XMP. In Photorhabdus laumondii subsp. laumondii (strain DSM 15139 / CIP 105565 / TT01) (Photorhabdus luminescens subsp. laumondii), this protein is GMP synthase [glutamine-hydrolyzing].